The sequence spans 250 residues: 5-oxoprolinase subunit A (250 aa).

The protein belongs to the LamB/PxpA family. In terms of assembly, forms a complex composed of PxpA, PxpB and PxpC.

The catalysed reaction is 5-oxo-L-proline + ATP + 2 H2O = L-glutamate + ADP + phosphate + H(+). Functionally, catalyzes the cleavage of 5-oxoproline to form L-glutamate coupled to the hydrolysis of ATP to ADP and inorganic phosphate. The chain is 5-oxoprolinase subunit A from Paraburkholderia phymatum (strain DSM 17167 / CIP 108236 / LMG 21445 / STM815) (Burkholderia phymatum).